Here is a 382-residue protein sequence, read N- to C-terminus: Gap junction alpha-1 protein (382 aa).

The Cytoplasmic segment spans residues 2–23 (GDWSALGKLLDKVQAYSTAGGK). Ser-5 carries the phosphoserine modification. Residues 24-44 (VWLSVLFIFRILLLGTAVESA) traverse the membrane as a helical segment. At 45-76 (WGDEQSAFRCNTQQPGCENVCYDKSFPISHVR) the chain is on the extracellular side. Intrachain disulfides connect Cys-54–Cys-192 and Cys-187–Cys-198. A helical transmembrane segment spans residues 77–97 (FWVLQIIFVSVPTLLYLAHVF). The Cytoplasmic portion of the chain corresponds to 98–155 (YVMRKEEKLNKKEEELKVAQTDGVNVDMHLKQIEIKKFKYGIEEHGKVKMRGGLLRTY). Lys-144 participates in a covalent cross-link: Glycyl lysine isopeptide (Lys-Gly) (interchain with G-Cter in SUMO). The helical transmembrane segment at 156 to 176 (IISILFKSIFEVAFLLIQWYI) threads the bilayer. Residues 177–207 (YGFSLSAVYTCKRDPCPHQVDCFLSRPTEKT) lie on the Extracellular side of the membrane. A helical membrane pass occupies residues 208–228 (IFIIFMLVVSLVSLALNIIEL). Over 229–382 (FYVFFKGVKD…SRPRPDDLEI (154 aa)) the chain is Cytoplasmic. A Glycyl lysine isopeptide (Lys-Gly) (interchain with G-Cter in SUMO) cross-link involves residue Lys-237. Residues 244 to 382 (SDPYHATSGA…SRPRPDDLEI (139 aa)) form an interaction with NOV region. Residue Tyr-247 is modified to Phosphotyrosine. Phosphoserine is present on residues Ser-255 and Ser-262. The interaction with UBQLN4 stretch occupies residues 264–382 (KYAYFNGCSS…SRPRPDDLEI (119 aa)). The residue at position 271 (Cys-271) is an S-nitrosocysteine. Thr-275 carries the phosphothreonine modification. 2 positions are modified to phosphoserine: Ser-306 and Ser-314. The segment covering 317–332 (QNRMGQAGSTISNSHA) has biased composition (polar residues). The tract at residues 317-382 (QNRMGQAGST…SRPRPDDLEI (66 aa)) is disordered. The residue at position 325 (Ser-325) is a Phosphoserine; by CK1. A Phosphothreonine modification is found at Thr-326. Residues Ser-328 and Ser-330 each carry the phosphoserine; by CK1 modification. A phosphoserine mark is found at Ser-344 and Ser-365. A compositionally biased stretch (low complexity) spans 362 to 374 (RPSSRASSRASSR). The residue at position 368 (Ser-368) is a Phosphoserine; by PKC/PRKCG and PKC/PRKCD. Residues Ser-369 and Ser-373 each carry the phosphoserine modification.

It belongs to the connexin family. Alpha-type (group II) subfamily. In terms of assembly, a connexon is composed of a hexamer of connexins. Interacts (via C-terminus) with TJP1. Interacts (via C-terminus) with SRC (via SH3 domain). Interacts (not ubiquitinated) with UBQLN4 (via UBA domain). Interacts with SGSM3 and CNST. Interacts with RIC1/CIP150. Interacts with CSNK1D. Interacts with NOV. Interacts with TMEM65. Interacts with ANK3/ANKG and PKP2. Phosphorylated at Ser-368 by PRKCG; phosphorylation induces disassembly of gap junction plaques and inhibition of gap junction activity. Phosphorylation at Ser-325, Ser-328 and Ser-330 by CK1 modulates gap junction assembly. Phosphorylation at Ser-368 by PRKCD triggers its internalization into small vesicles leading to proteasome-mediated degradation. Post-translationally, sumoylated with SUMO1, SUMO2 and SUMO3, which may regulate the level of functional Cx43 gap junctions at the plasma membrane. May be desumoylated by SENP1 or SENP2. In terms of processing, S-nitrosylation at Cys-271 is enriched at the muscle endothelial gap junction in arteries, it augments channel permeability and may regulate of smooth muscle cell to endothelial cell communication. Acetylated in the developing cortex; leading to delocalization from the cell membrane. Expressed at intercalated disks in the heart (at protein level). Expressed in the fetal cochlea.

Its subcellular location is the cell membrane. It is found in the cell junction. The protein localises to the gap junction. The protein resides in the endoplasmic reticulum. Functionally, gap junction protein that acts as a regulator of bladder capacity. A gap junction consists of a cluster of closely packed pairs of transmembrane channels, the connexons, through which materials of low MW diffuse from one cell to a neighboring cell. May play a critical role in the physiology of hearing by participating in the recycling of potassium to the cochlear endolymph. Negative regulator of bladder functional capacity: acts by enhancing intercellular electrical and chemical transmission, thus sensitizing bladder muscles to cholinergic neural stimuli and causing them to contract. May play a role in cell growth inhibition through the regulation of NOV expression and localization. Plays an essential role in gap junction communication in the ventricles. The sequence is that of Gap junction alpha-1 protein (GJA1) from Homo sapiens (Human).